A 221-amino-acid polypeptide reads, in one-letter code: Large ribosomal subunit protein uL3 (221 aa).

The tract at residues G140–S160 is disordered.

This sequence belongs to the universal ribosomal protein uL3 family. As to quaternary structure, part of the 50S ribosomal subunit. Forms a cluster with proteins L14 and L19.

In terms of biological role, one of the primary rRNA binding proteins, it binds directly near the 3'-end of the 23S rRNA, where it nucleates assembly of the 50S subunit. The polypeptide is Large ribosomal subunit protein uL3 (Chlamydia caviae (strain ATCC VR-813 / DSM 19441 / 03DC25 / GPIC) (Chlamydophila caviae)).